A 309-amino-acid polypeptide reads, in one-letter code: Olfactory receptor 8B4 (309 aa).

Residues 1 to 25 (MTLRNSSSVTEFILVGLSEQPELQL) are Extracellular-facing. The N-linked (GlcNAc...) asparagine glycan is linked to Asn-5. The helical transmembrane segment at 26 to 46 (PLFLLFLGIYVFTVVGNLGLI) threads the bilayer. Topologically, residues 47–54 (TLIGINPS) are cytoplasmic. A helical membrane pass occupies residues 55-75 (LHTPMYFFLFNLSFIDLCYSC). Residues 76–98 (VFTPKMLNDFVSESIISYVGCMT) are Extracellular-facing. An intrachain disulfide couples Cys-96 to Cys-188. Residues 99 to 119 (QLFFFCFFVNSECYVLVSMAY) form a helical membrane-spanning segment. Topologically, residues 120–138 (DRYVAICNPLLYMVTMSPR) are cytoplasmic. A helical membrane pass occupies residues 139–159 (VCFLLMFGSYVVGFAGAMAHT). Residues 160-196 (GSMLRLTFCDSNVIDHYLCDVLPLLQLSCTSTHVSEL) lie on the Extracellular side of the membrane. Residues 197–216 (VFFIVVGVITMLSSISIVIS) form a helical membrane-spanning segment. At 217 to 236 (YALILSNILCIPSAEGRSKA) the chain is on the cytoplasmic side. A helical transmembrane segment spans residues 237 to 257 (FSTWGSHIIAVALFFGSGTFT). The Extracellular segment spans residues 258–270 (YLTTSFPGSMNHG). The helical transmembrane segment at 271-291 (RFASVFYTNVVPMLNPSIYSL) threads the bilayer. Over 292–309 (RNKDDKLALGKTLKRVLF) the chain is Cytoplasmic.

It belongs to the G-protein coupled receptor 1 family.

It is found in the cell membrane. Odorant receptor. This is Olfactory receptor 8B4 (OR8B4) from Homo sapiens (Human).